Here is a 317-residue protein sequence, read N- to C-terminus: DNA repair nuclease/redox regulator APEX1 (317 aa).

Residues 1–32 (MPKRGKRAAAEDGEEPKSEPETKKSKGAAKKT) are necessary for interaction with YBX1, binding to RNA, association together with NPM1 to rRNA, endoribonuclease activity on abasic RNA and localization in the nucleoli. The segment at 1–57 (MPKRGKRAAAEDGEEPKSEPETKKSKGAAKKTEKEAAGEGPVLYEDPPDQKTSASGK) is disordered. Lysine 6 carries the post-translational modification N6-acetyllysine; by EP300. Residues 8–12 (AAAED) carry the Nuclear localization signal (NLS) motif. Residues 15–37 (EPKSEPETKKSKGAAKKTEKEAA) are compositionally biased toward basic and acidic residues. Serine 18 carries the post-translational modification Phosphoserine. Residues 22–32 (TKKSKGAAKKT) form a necessary for interaction with NPM1 and for efficient rRNA binding region. 4 positions are modified to N6-acetyllysine: lysine 26, lysine 30, lysine 31, and lysine 34. Residue serine 53 is modified to Phosphoserine. The Nuclear export signal (NES) signature appears at 63–79 (ICSWNVDGLRAWIKKKG). Position 64 is an S-nitrosocysteine; alternate (cysteine 64). Cysteine 64 and cysteine 92 are oxidised to a cystine. Aspartate 69 is a binding site for Mg(2+). Cysteine 92 is subject to S-nitrosocysteine; alternate. Residue glutamate 95 participates in Mg(2+) binding. Tyrosine 170 is an active-site residue. Residue lysine 196 is modified to N6-acetyllysine. Residues aspartate 209 and asparagine 211 each contribute to the Mg(2+) site. Aspartate 209 functions as the Proton donor/acceptor in the catalytic mechanism. Threonine 232 carries the phosphothreonine; by CDK5 modification. The interval 288 to 317 (HSLLPALCDSKIRSKALGSDHCPITLYLAL) is mitochondrial targeting sequence (MTS). Residue aspartate 307 coordinates Mg(2+). An S-nitrosocysteine modification is found at cysteine 309.

Belongs to the DNA repair enzymes AP/ExoA family. Monomer. Homodimer; disulfide-linked. Component of the SET complex, composed of at least APEX1, SET, ANP32A, HMGB2, NME1 and TREX1. Associates with the dimer XRCC5/XRCC6 in a DNA-dependent manner. Interacts with SIRT1; the interaction is increased in the context of genotoxic stress. Interacts with HDAC1, HDAC2 and HDAC3; the interactions are not dependent on the APEX1 acetylation status. Interacts with XRCC1; the interaction is induced by SIRT1 and increased with the APEX1 acetylated form. Interacts with NPM1 (via N-terminal domain); the interaction is RNA-dependent and decreases in hydrogen peroxide-damaged cells. Interacts (via N-terminus) with YBX1 (via C-terminus); the interaction is increased in presence of APEX1 acetylated. Interacts with HNRNPL; the interaction is DNA-dependent. Interacts (via N-terminus) with KPNA1 and KPNA2. Interacts with TXN; the interaction stimulates the FOS/JUN AP-1 complex DNA-binding activity in a redox-dependent manner. Interacts with GZMA, KRT8, MDM2, POLB, PRDX6, PRPF19, RPLP0, TOMM20 and WDR77. Binds to CDK5. Mg(2+) serves as cofactor. The cofactor is Mn(2+). Post-translationally, phosphorylated. Phosphorylation by kinase PKC or casein kinase CK2 results in enhanced redox activity that stimulates binding of the FOS/JUN AP-1 complex to its cognate binding site. AP-endodeoxyribonuclease activity is not affected by CK2-mediated phosphorylation. Phosphorylation of Thr-232 by CDK5 in response to MPP(+)/MPTP (1-methyl-4-phenylpyridinium) reduces AP-endodeoxyribonuclease activity resulting in accumulation of DNA damage and contributing to neuronal death. In terms of processing, acetylated on Lys-6. Acetylation is increased by the transcriptional coactivator EP300 acetyltransferase, genotoxic agents like H(2)O(2) and methyl methanesulfonate (MMS). Acetylation increases its binding affinity to the negative calcium response element (nCaRE) DNA promoter. The acetylated form induces a stronger binding of YBX1 to the Y-box sequence in the MDR1 promoter than the unacetylated form. Deacetylated on lysines. Lys-6 is deacetylated by SIRT1. Cleaved at Lys-30 by granzyme A to create the mitochondrial form; leading in reduction of binding to DNA, AP endodeoxyribonuclease activity, redox activation of transcription factors and to enhanced cell death. Cleaved by granzyme K; leading to intracellular ROS accumulation and enhanced cell death after oxidative stress. Post-translationally, cys-64 and Cys-92 are nitrosylated in response to nitric oxide (NO) and lead to the exposure of the nuclear export signal (NES). In terms of processing, ubiquitinated by MDM2; leading to translocation to the cytoplasm and proteasomal degradation.

The protein resides in the nucleus. It is found in the nucleolus. The protein localises to the nucleus speckle. Its subcellular location is the endoplasmic reticulum. It localises to the cytoplasm. The protein resides in the mitochondrion. It catalyses the reaction a deoxyribonucleotide-2'-deoxyribose-5'-monophosphate-DNA + H2O = a 5'-end 2'-deoxyribose-5'-monophosphate-DNA + a 3'-end 2'-deoxyribonucleotide-DNA + H(+). The enzyme catalyses Exonucleolytic cleavage in the 3'- to 5'-direction to yield nucleoside 5'-phosphates.. The catalysed reaction is a 3'-end 2'-deoxyribonucleotide-3'-phosphoglycolate-DNA + H2O = 2-phosphoglycolate + a 3'-end 2'-deoxyribonucleotide-DNA + H(+). It carries out the reaction a 3'-end 2'-deoxyribonucleotide-8-oxoguanine-DNA + H2O = 8-oxo-dGMP + a 3'-end 2'-deoxyribonucleotide-DNA + H(+). Its activity is regulated as follows. NPM1 stimulates endodeoxyribonuclease activity on double-stranded DNA with AP sites, but inhibits endoribonuclease activity on single-stranded RNA containing AP sites. In terms of biological role, multifunctional protein that plays a central role in the cellular response to oxidative stress. The two major activities of APEX1 are DNA repair and redox regulation of transcriptional factors. Functions as an apurinic/apyrimidinic (AP) endodeoxyribonuclease in the base excision repair (BER) pathway of DNA lesions induced by oxidative and alkylating agents. Initiates repair of AP sites in DNA by catalyzing hydrolytic incision of the phosphodiester backbone immediately adjacent to the damage, generating a single-strand break with 5'-deoxyribose phosphate and 3'-hydroxyl ends. Also incises at AP sites in the DNA strand of DNA/RNA hybrids, single-stranded DNA regions of R-loop structures, and single-stranded RNA molecules. Operates at switch sites of immunoglobulin (Ig) constant regions where it mediates Ig isotype class switch recombination. Processes AP sites induced by successive action of AICDA and UNG. Generates staggered nicks in opposite DNA strands resulting in the formation of double-strand DNA breaks that are finally resolved via non-homologous end joining repair pathway. Has 3'-5' exodeoxyribonuclease activity on mismatched deoxyribonucleotides at the 3' termini of nicked or gapped DNA molecules during short-patch BER. Possesses DNA 3' phosphodiesterase activity capable of removing lesions (such as phosphoglycolate and 8-oxoguanine) blocking the 3' side of DNA strand breaks. Also acts as an endoribonuclease involved in the control of single-stranded RNA metabolism. Plays a role in regulating MYC mRNA turnover by preferentially cleaving in between UA and CA dinucleotides of the MYC coding region determinant (CRD). In association with NMD1, plays a role in the rRNA quality control process during cell cycle progression. Acts as a loading factor for POLB onto non-incised AP sites in DNA and stimulates the 5'-terminal deoxyribose 5'-phosphate (dRp) excision activity of POLB. Exerts reversible nuclear redox activity to regulate DNA binding affinity and transcriptional activity of transcriptional factors by controlling the redox status of their DNA-binding domain, such as the FOS/JUN AP-1 complex after exposure to IR. Involved in calcium-dependent down-regulation of parathyroid hormone (PTH) expression by binding to negative calcium response elements (nCaREs). Together with HNRNPL or the dimer XRCC5/XRCC6, associates with nCaRE, acting as an activator of transcriptional repression. May also play a role in the epigenetic regulation of gene expression by participating in DNA demethylation. Stimulates the YBX1-mediated MDR1 promoter activity, when acetylated at Lys-6 and Lys-7, leading to drug resistance. Plays a role in protection from granzyme-mediated cellular repair leading to cell death. Binds DNA and RNA. Associates, together with YBX1, on the MDR1 promoter. Together with NPM1, associates with rRNA. The polypeptide is DNA repair nuclease/redox regulator APEX1 (Apex1) (Rattus norvegicus (Rat)).